The following is a 325-amino-acid chain: Pyruvate dehydrogenase E1 component subunit beta (325 aa).

E60 is a binding site for thiamine diphosphate.

As to quaternary structure, heterodimer of an alpha and a beta chain. The cofactor is thiamine diphosphate.

The protein resides in the cytoplasm. It is found in the secreted. The enzyme catalyses N(6)-[(R)-lipoyl]-L-lysyl-[protein] + pyruvate + H(+) = N(6)-[(R)-S(8)-acetyldihydrolipoyl]-L-lysyl-[protein] + CO2. Activity of the E1 module is inhibited by the pyruvate dehydrogenase inhibitor PdhI. Functionally, the pyruvate dehydrogenase complex catalyzes the overall conversion of pyruvate to acetyl-CoA and CO(2). It contains multiple copies of three enzymatic components: pyruvate dehydrogenase (E1), dihydrolipoamide acetyltransferase (E2) and lipoamide dehydrogenase (E3). In terms of biological role, the B.subtilis PDH complex also possesses branched-chain 2-oxoacid dehydrogenase (BCDH) activity. The polypeptide is Pyruvate dehydrogenase E1 component subunit beta (Bacillus subtilis (strain 168)).